The chain runs to 314 residues: Thymidylate synthase (314 aa).

DUMP is bound by residues Arg21 and Arg176–Arg177. The active-site Nucleophile is Cys196. DUMP is bound by residues Arg216–Asp219, Asn227, and His257–Tyr259. Asp219 provides a ligand contact to (6R)-5,10-methylene-5,6,7,8-tetrahydrofolate. Ser313 contributes to the (6R)-5,10-methylene-5,6,7,8-tetrahydrofolate binding site.

The protein belongs to the thymidylate synthase family. Bacterial-type ThyA subfamily. In terms of assembly, homodimer.

It localises to the cytoplasm. It carries out the reaction dUMP + (6R)-5,10-methylene-5,6,7,8-tetrahydrofolate = 7,8-dihydrofolate + dTMP. Its pathway is pyrimidine metabolism; dTTP biosynthesis. In terms of biological role, catalyzes the reductive methylation of 2'-deoxyuridine-5'-monophosphate (dUMP) to 2'-deoxythymidine-5'-monophosphate (dTMP) while utilizing 5,10-methylenetetrahydrofolate (mTHF) as the methyl donor and reductant in the reaction, yielding dihydrofolate (DHF) as a by-product. This enzymatic reaction provides an intracellular de novo source of dTMP, an essential precursor for DNA biosynthesis. The sequence is that of Thymidylate synthase from Listeria innocua serovar 6a (strain ATCC BAA-680 / CLIP 11262).